The following is a 372-amino-acid chain: Carbamoyl phosphate synthase small chain (372 aa).

Residues 1 to 184 (MKAYIYLEND…SFQKFNDAKR (184 aa)) form a CPSase region. The L-glutamine site is built by Ser-45, Gly-240, and Gly-242. In terms of domain architecture, Glutamine amidotransferase type-1 spans 188 to 372 (KVAVIDYGVK…YIFKEFMNLM (185 aa)). Cys-268 acts as the Nucleophile in catalysis. Leu-269, Gln-272, Asn-310, and Tyr-313 together coordinate L-glutamine. Catalysis depends on residues His-351 and Glu-353.

It belongs to the CarA family. Composed of two chains; the small (or glutamine) chain promotes the hydrolysis of glutamine to ammonia, which is used by the large (or ammonia) chain to synthesize carbamoyl phosphate. Tetramer of heterodimers (alpha,beta)4.

The catalysed reaction is hydrogencarbonate + L-glutamine + 2 ATP + H2O = carbamoyl phosphate + L-glutamate + 2 ADP + phosphate + 2 H(+). It catalyses the reaction L-glutamine + H2O = L-glutamate + NH4(+). The protein operates within amino-acid biosynthesis; L-arginine biosynthesis; carbamoyl phosphate from bicarbonate: step 1/1. It functions in the pathway pyrimidine metabolism; UMP biosynthesis via de novo pathway; (S)-dihydroorotate from bicarbonate: step 1/3. Functionally, small subunit of the glutamine-dependent carbamoyl phosphate synthetase (CPSase). CPSase catalyzes the formation of carbamoyl phosphate from the ammonia moiety of glutamine, carbonate, and phosphate donated by ATP, constituting the first step of 2 biosynthetic pathways, one leading to arginine and/or urea and the other to pyrimidine nucleotides. The small subunit (glutamine amidotransferase) binds and cleaves glutamine to supply the large subunit with the substrate ammonia. The polypeptide is Carbamoyl phosphate synthase small chain (Campylobacter jejuni subsp. jejuni serotype O:2 (strain ATCC 700819 / NCTC 11168)).